A 515-amino-acid polypeptide reads, in one-letter code: MSRIKIFDTTLRDGEQSPGVNLNKAEKLEIAKQLEKYGVDRMEAGFPASSKGDFESVKQIAETIKSSSVIALARAVKSDIDIAYEALKGAEKPAIHIFLATSPIHMTYKLKKSPEQVIETAVNMVTYAKERFDEIEWSAEDATRSDWNFLAQIIEKVIEAGATVINLPDTVGYTTPEEYGKLFRFIKETVPNINQVALSCHCHNDLGMAVANSIAAVENGATQVEGTINGIGERAGNAALEEVAVALKIRSDYYPFETGLILKETKRTSDLVAKLTGMYVQANKAVIGRNAFSHESGIHQDGVLKNTETYEIITPEMVGVSSNTLFLGKHSGRHAFKDKLKEFGVELSEEELKTAFEQFKLLTDQKKEVTDDDLYTILMDIKTDSTVVDKYKLIQFGVSYDTAATPKANVILESPNGSLIEATQQGNGSVEALYKTINYLIAENITLVDYQINSVGGGKDALAESHVQIIINGETINGRGSAQDVLQASAVAFIQAVNRYYVQKKANLTRLVYES.

The region spanning 4–266 (IKIFDTTLRD…ETGLILKETK (263 aa)) is the Pyruvate carboxyltransferase domain. Mn(2+)-binding residues include D13, H201, H203, and N237. The regulatory domain stretch occupies residues 392–515 (KLIQFGVSYD…ANLTRLVYES (124 aa)).

It belongs to the alpha-IPM synthase/homocitrate synthase family. LeuA type 1 subfamily. As to quaternary structure, homodimer. Mn(2+) is required as a cofactor.

Its subcellular location is the cytoplasm. It carries out the reaction 3-methyl-2-oxobutanoate + acetyl-CoA + H2O = (2S)-2-isopropylmalate + CoA + H(+). Its pathway is amino-acid biosynthesis; L-leucine biosynthesis; L-leucine from 3-methyl-2-oxobutanoate: step 1/4. Its function is as follows. Catalyzes the condensation of the acetyl group of acetyl-CoA with 3-methyl-2-oxobutanoate (2-ketoisovalerate) to form 3-carboxy-3-hydroxy-4-methylpentanoate (2-isopropylmalate). The protein is 2-isopropylmalate synthase of Oceanobacillus iheyensis (strain DSM 14371 / CIP 107618 / JCM 11309 / KCTC 3954 / HTE831).